A 294-amino-acid polypeptide reads, in one-letter code: MASFRRFRLLSPLKPCVTFGRMLYTRIDKDGLTMLAGHLAYVSLLSLVPLITVIFALFAAFPMFAEISIKLKAFIFANFMPATGDIIQNYLEQFVANSNRMTVVGTCGLIVTALLLIYSVDSVLNIIWRSKIQRSLVFSFAVYWMVLTLGPILVGASMVISSYLLSLHWLAHARVDSMIDEILRVFPLLISWVSFWLLYSVVPTVRVPARDALIGALVAALLFELGKKGFAMYITLFPSYQLIYGVLAVIPILFLWVYWSWCIVLLGAEITVTLGEYRAERHHAKSVTTQSPEM.

The next 7 membrane-spanning stretches (helical) occupy residues 44-64 (LLSLVPLITVIFALFAAFPMF), 67-87 (ISIKLKAFIFANFMPATGDII), 108-128 (GLIVTALLLIYSVDSVLNIIW), 136-156 (LVFSFAVYWMVLTLGPILVGA), 185-205 (VFPLLISWVSFWLLYSVVPTV), 212-232 (ALIGALVAALLFELGKKGFAM), and 246-266 (VLAVIPILFLWVYWSWCIVLL).

The protein belongs to the UPF0761 family.

The protein localises to the cell inner membrane. The sequence is that of UPF0761 membrane protein YPN_0254 from Yersinia pestis bv. Antiqua (strain Nepal516).